We begin with the raw amino-acid sequence, 50 residues long: Protein hunchback (50 aa).

3 C2H2-type zinc fingers span residues 1–5 (HILKH), 11–33 (IRCP…MKSH), and 39–50 (YRCLDCNYATKY).

The protein belongs to the hunchback C2H2-type zinc-finger protein family.

The protein resides in the nucleus. Functionally, gap class segmentation protein that controls development of head structures. This is Protein hunchback (hb) from Bradysia coprophila (Dark-winged fungus gnat).